The sequence spans 405 residues: Ubiquitin-like modifier-activating enzyme 5 (405 aa).

Residues 1-44 (MATVEELQTRVKQLEEELERERTRNRGGTDGGGGRKKIDQMSSE) are disordered. Residues 7–24 (LQTRVKQLEEELERERTR) are compositionally biased toward basic and acidic residues. ATP is bound by residues Gly81, Asp102, Lys125, Asn148, and Asn182. Cys224 and Cys227 together coordinate Zn(2+). Cys248 (glycyl thioester intermediate) is an active-site residue. Positions 301 and 306 each coordinate Zn(2+). Residues 346-377 (AETTEEELKAASHGHVPELVEGVHVAYVRPMT) are linker. The UFC1-binding sequence (UFC) motif lies at 390 to 405 (DDQESLEDLMAKMKSI).

This sequence belongs to the ubiquitin-activating E1 family. UBA5 subfamily. As to quaternary structure, homodimer; homodimerization is required for UFM1 activation. Interacts (via UIS motif) with UFM1; binds UFM1 via a trans-binding mechanism in which UFM1 interacts with distinct sites in both subunits of the UBA5 homodimer. Interacts (via C-terminus) with UFC1.

It localises to the cytoplasm. The protein localises to the nucleus. Its subcellular location is the endoplasmic reticulum membrane. It is found in the golgi apparatus. Functionally, E1-like enzyme which specifically catalyzes the first step in ufmylation. Activates UFM1 by first adenylating its C-terminal glycine residue with ATP, and thereafter linking this residue to the side chain of a cysteine residue in E1, yielding a UFM1-E1 thioester and free AMP. Activates UFM1 via a trans-binding mechanism, in which UFM1 interacts with distinct sites in both subunits of the UBA5 homodimer. Trans-binding also promotes stabilization of the UBA5 homodimer, and enhances ATP-binding. Transfer of UFM1 from UBA5 to the E2-like enzyme UFC1 also takes place using a trans mechanism. This Branchiostoma floridae (Florida lancelet) protein is Ubiquitin-like modifier-activating enzyme 5.